The sequence spans 76 residues: uncharacterized protein (76 aa).

Residues 27 to 76 (SINNGEGSSVVHRDATAPPTPPVVPTSTLQVPGLQRARTPEPNDPRVANL) form a disordered region.

This is an uncharacterized protein from Caenorhabditis elegans.